A 354-amino-acid chain; its full sequence is DNA polymerase IV (354 aa).

Residues 14-198 (IIHIDMDAFF…MDIAKFHGVG (185 aa)) form the UmuC domain. Mg(2+)-binding residues include Asp18 and Asp116. Glu117 is an active-site residue.

The protein belongs to the DNA polymerase type-Y family. As to quaternary structure, monomer. The cofactor is Mg(2+).

The protein resides in the cytoplasm. It carries out the reaction DNA(n) + a 2'-deoxyribonucleoside 5'-triphosphate = DNA(n+1) + diphosphate. Poorly processive, error-prone DNA polymerase involved in untargeted mutagenesis. Copies undamaged DNA at stalled replication forks, which arise in vivo from mismatched or misaligned primer ends. These misaligned primers can be extended by PolIV. Exhibits no 3'-5' exonuclease (proofreading) activity. May be involved in translesional synthesis, in conjunction with the beta clamp from PolIII. This is DNA polymerase IV from Streptococcus gordonii (strain Challis / ATCC 35105 / BCRC 15272 / CH1 / DL1 / V288).